Consider the following 314-residue polypeptide: A-kinase anchor protein 7 isoform gamma (314 aa).

The tract at residues 1–46 (MPFAAVDIQDDCGSPDVPQANPKRSKEEEEDRGDKNDHVKKRKKAK) is disordered. Over residues 24-37 (RSKEEEEDRGDKND) the composition is skewed to basic and acidic residues. AMP contacts are provided by residues Thr-95 and 185–187 (HLT). Residues Thr-95 and 185–187 (HLT) contribute to the CMP site. The PKA-RII-alpha subunit binding domain stretch occupies residues 260 to 314 (AELVRLSKRLVENAVLKAVQQYLEETQNKKQPGEGNSTKAEEGDRNGDGSDNNRK). The interval 261 to 285 (ELVRLSKRLVENAVLKAVQQYLEET) is RI-alpha-binding. The tract at residues 262 to 275 (LVRLSKRLVENAVL) is RII-binding. The segment at 281 to 314 (YLEETQNKKQPGEGNSTKAEEGDRNGDGSDNNRK) is disordered. Basic and acidic residues predominate over residues 298-314 (KAEEGDRNGDGSDNNRK).

In terms of assembly, binds cAMP-dependent protein kinase (PKA). Interacts with PRKCA; only the cytoplasmic form is capable of interacting with PRKCA. As to expression, expressed in oocytes.

It localises to the nucleus. It is found in the cytoplasm. In terms of biological role, probably targets cAMP-dependent protein kinase (PKA) to the cellular membrane or cytoskeletal structures. The membrane-associated form reduces epithelial sodium channel (ENaC) activity, whereas the free cytoplasmic form may negatively regulate ENaC channel feedback inhibition by intracellular sodium. This is A-kinase anchor protein 7 isoform gamma from Mus musculus (Mouse).